Reading from the N-terminus, the 316-residue chain is Triplex capsid protein 2 (316 aa).

Belongs to the herpesviridae TRX2 protein family. In terms of assembly, interacts with TRX1 and major capisd protein/MCP.

It localises to the virion. Its subcellular location is the host nucleus. Its function is as follows. Structural component of the T=16 icosahedral capsid. The capsid is composed of pentamers and hexamers of major capsid protein/MCP, which are linked together by heterotrimers called triplexes. These triplexes are formed by a single molecule of triplex protein 1/TRX1 and two copies of triplex protein 2/TRX2. Additionally, TRX1 is required for efficient transport of TRX2 to the nucleus, which is the site of capsid assembly. The polypeptide is Triplex capsid protein 2 (Homo sapiens (Human)).